We begin with the raw amino-acid sequence, 525 residues long: MLWLWLGLSGQKLLLWGAASAVSVAGATVLLNILQMLVSYARKWQQMRPIPSVARAYPLVGHALFMKPNNTEFFQQIIQYTEEFRHLPIIKLWIGPVPLVALYKAENVEVILTSSKQIDKSFMYKFLQPWLGLGLLTSTGSKWRARRKMLTPSFHFTILEDFLDVMNEQANILVNKLEKHVNQEAFNCFFPITLCALDIICETAMGKNIGAQSNGDSEYVRTVYRMSDMIYRRMKMPWFWFDLWYLMFKEGRDHKKGLKSLHTFTNNVIAERVNARKAEQDCIGAGRGPLPSKTKRKAFLDLLLSVTDEEGNKLSHEDIREEVDTFMFEGHDTTAAAINWSLYLLGSNPEVQRKVDKELDDVFGRSHRPVTLEDLKKLKYLDCVIKETLRVFPSVPLFARSLSEDCEVAGYKISKGTEAVIIPYALHRDPRYFPDPEEFQPERFFPENSQGRHPYAYVPFSAGPRNCIGQKFAVMEEKTILACILREFWIESNQKREELGLAGDLILRPNNGIWIKLKRRHEDDP.

A helical transmembrane segment spans residues 13–33; it reads LLLWGAASAVSVAGATVLLNI. Glu329 and Cys467 together coordinate heme.

This sequence belongs to the cytochrome P450 family. Heme serves as cofactor.

It is found in the endoplasmic reticulum membrane. The catalysed reaction is dodecanoate + reduced [NADPH--hemoprotein reductase] + O2 = 12-hydroxydodecanoate + oxidized [NADPH--hemoprotein reductase] + H2O + H(+). It carries out the reaction tetradecanoate + reduced [NADPH--hemoprotein reductase] + O2 = 14-hydroxytetradecanoate + oxidized [NADPH--hemoprotein reductase] + H2O + H(+). The enzyme catalyses hexadecanoate + reduced [NADPH--hemoprotein reductase] + O2 = 16-hydroxyhexadecanoate + oxidized [NADPH--hemoprotein reductase] + H2O + H(+). It catalyses the reaction (5Z,8Z,11Z,14Z,17Z)-eicosapentaenoate + reduced [NADPH--hemoprotein reductase] + O2 = 20-hydroxy-(5Z,8Z,11Z,14Z,17Z)-eicosapentaenoate + oxidized [NADPH--hemoprotein reductase] + H2O + H(+). The catalysed reaction is (4Z,7Z,10Z,13Z,16Z,19Z)-docosahexaenoate + reduced [NADPH--hemoprotein reductase] + O2 = 22-hydroxy-(4Z,7Z,10Z,13Z,16Z,19Z)-docosahexaenoate + oxidized [NADPH--hemoprotein reductase] + H2O + H(+). It participates in lipid metabolism; fatty acid metabolism. Its activity is regulated as follows. Inhibited by N-hydroxy-N'-(4-n-butyl-2-methylphenyl formamidine)(HET0016) with an IC(50) of 38 nM. Its function is as follows. A cytochrome P450 monooxygenase involved in fatty acid metabolism in the eye. Catalyzes the omega-hydroxylation of polyunsaturated fatty acids (PUFAs) docosahexaenoate (DHA) and its precursor eicosapentaenoate (EPA), and may contribute to the homeostasis of these retinal PUFAs. Omega hydroxylates saturated fatty acids such as laurate, myristate and palmitate, the catalytic efficiency decreasing in the following order: myristate &gt; laurate &gt; palmitate (C14&gt;C12&gt;C16). Mechanistically, uses molecular oxygen inserting one oxygen atom into a substrate, and reducing the second into a water molecule, with two electrons provided by NADPH via cytochrome P450 reductase (CPR; NADPH-ferrihemoprotein reductase). This chain is Cytochrome P450 4V2 (Cyp4v2), found in Rattus norvegicus (Rat).